Here is a 344-residue protein sequence, read N- to C-terminus: N-acetyl-gamma-glutamyl-phosphate reductase (344 aa).

C150 is an active-site residue.

It belongs to the NAGSA dehydrogenase family. Type 1 subfamily.

The protein localises to the cytoplasm. It carries out the reaction N-acetyl-L-glutamate 5-semialdehyde + phosphate + NADP(+) = N-acetyl-L-glutamyl 5-phosphate + NADPH + H(+). It participates in amino-acid biosynthesis; L-arginine biosynthesis; N(2)-acetyl-L-ornithine from L-glutamate: step 3/4. Functionally, catalyzes the NADPH-dependent reduction of N-acetyl-5-glutamyl phosphate to yield N-acetyl-L-glutamate 5-semialdehyde. The polypeptide is N-acetyl-gamma-glutamyl-phosphate reductase (Pseudomonas putida (strain ATCC 700007 / DSM 6899 / JCM 31910 / BCRC 17059 / LMG 24140 / F1)).